A 205-amino-acid chain; its full sequence is Protein Nef (205 aa).

Gly2 carries N-myristoyl glycine; by host lipidation. Ser6 is modified (phosphoserine; by host). Positions 62-65 (DNEE) are acidic; interacts with host PACS1 and PACS2; stabilizes the interaction of NEF/MHC-I with host AP1M1; necessary for MHC-I internalization. Positions 69 to 78 (PVRPQVPTRP) are SH3-binding; interaction with Src family tyrosine kinases. The PxxP; stabilizes the interaction of NEF/MHC-I with host AP1M1; necessary for MHC-I internalization motif lies at 72–75 (PQVP). The mediates dimerization, Nef-PTE1 interaction stretch occupies residues 108–124 (EILDLWVYHTQGFFPDW). The tract at residues 148–180 (LTEEQVEQANEGDNNCLLHPICQHGMEDEDKEV) is binding to ATP6V1H. The short motif at 164 to 165 (LL) is the Dileucine internalization motif; necessary for CD4 internalization element. The Diacidic; necessary for CD4 internalization motif lies at 174-175 (ED).

The protein belongs to the lentivirus primate group Nef protein family. Monomer; cytosolic form. Homodimer; membrane bound form. Interacts with Nef associated p21-activated kinase (PAK2); this interaction activates PAK2. Associates with the Nef-MHC-I-AP1 complex; this complex is required for MHC-I internalization. Interacts (via C-terminus) with host PI3-kinase. Interacts with host PACS1; this interaction seems to be weak. Interacts with host PACS2. Interacts with host LCK and MAPK3; these interactions inhibit the kinase activity of the latter. Interacts with host ATP6V1H; this interaction may play a role in CD4 endocytosis. Associates with the CD4-Nef-AP2 complex; this complex is required for CD4 internalization. Interacts with host AP2 subunit alpha and AP2 subunit sigma2. Interacts with TCR-zeta chain; this interaction up-regulates the Fas ligand (FasL) surface expression. Interacts with host HCK, LYN, and SRC; these interactions activate the Src family kinases. Interacts with MAP3K5; this interaction inhibits the Fas and TNFR-mediated death signals. Interacts with beta-COP and PTE1. Interacts with human RACK1; this increases Nef phosphorylation by PKC. Interacts with TP53; this interaction decreases the half-life of TP53, protecting the infected cell against p53-mediated apoptosis. Post-translationally, the virion-associated Nef proteins are cleaved by the viral protease to release the soluble C-terminal core protein. Nef is probably cleaved concomitantly with viral structural proteins on maturation of virus particles. Myristoylated. In terms of processing, phosphorylated on serine residues, probably by host PKCdelta and theta.

It localises to the host cell membrane. Its subcellular location is the virion. The protein localises to the secreted. It is found in the host Golgi apparatus membrane. Factor of infectivity and pathogenicity, required for optimal virus replication. Alters numerous pathways of T-lymphocyte function and down-regulates immunity surface molecules in order to evade host defense and increase viral infectivity. Alters the functionality of other immunity cells, like dendritic cells, monocytes/macrophages and NK cells. In terms of biological role, in infected CD4(+) T-lymphocytes, down-regulates the surface MHC-I, mature MHC-II, CD4, CD28, CCR5 and CXCR4 molecules. Mediates internalization and degradation of host CD4 through the interaction of with the cytoplasmic tail of CD4, the recruitment of AP-2 (clathrin adapter protein complex 2), internalization through clathrin coated pits, and subsequent transport to endosomes and lysosomes for degradation. Diverts host MHC-I molecules to the trans-Golgi network-associated endosomal compartments by an endocytic pathway to finally target them for degradation. MHC-I down-regulation may involve AP-1 (clathrin adapter protein complex 1) or possibly Src family kinase-ZAP70/Syk-PI3K cascade recruited by PACS2. In consequence infected cells are masked for immune recognition by cytotoxic T-lymphocytes. Decreasing the number of immune receptors also prevents reinfection by more HIV particles (superinfection). Down-regulates host SERINC3 and SERINC5 thereby excluding these proteins from the viral particles. Virion infectivity is drastically higher when SERINC3 or SERINC5 are excluded from the viral envelope, because these host antiviral proteins impair the membrane fusion event necessary for subsequent virion penetration. Functionally, bypasses host T-cell signaling by inducing a transcriptional program nearly identical to that of anti-CD3 cell activation. Interaction with TCR-zeta chain up-regulates the Fas ligand (FasL). Increasing surface FasL molecules and decreasing surface MHC-I molecules on infected CD4(+) cells send attacking cytotoxic CD8+ T-lymphocytes into apoptosis. Its function is as follows. Plays a role in optimizing the host cell environment for viral replication without causing cell death by apoptosis. Protects the infected cells from apoptosis in order to keep them alive until the next virus generation is ready to strike. Inhibits the Fas and TNFR-mediated death signals by blocking MAP3K5/ASK1. Decreases the half-life of TP53, protecting the infected cell against p53-mediated apoptosis. Inhibits the apoptotic signals regulated by the Bcl-2 family proteins through the formation of a Nef/PI3-kinase/PAK2 complex that leads to activation of PAK2 and induces phosphorylation of host BAD. Extracellular Nef protein targets CD4(+) T-lymphocytes for apoptosis by interacting with CXCR4 surface receptors. The protein is Protein Nef of Simian immunodeficiency virus (isolate CPZ GAB1) (SIV-cpz).